The following is a 379-amino-acid chain: Cytochrome b (379 aa).

4 helical membrane passes run 33 to 53, 77 to 98, 113 to 133, and 178 to 198; these read FGSL…FLAM, WLIR…FIHV, WNIG…GYVL, and FFAF…VHLL. Residues His-83 and His-97 each contribute to the heme b site. 2 residues coordinate heme b: His-182 and His-196. Position 201 (His-201) interacts with a ubiquinone. The next 4 membrane-spanning stretches (helical) occupy residues 226–246, 288–308, 320–340, and 347–367; these read TKDL…ALFF, LGGV…PLLN, VTQV…WIGG, and FTMI…ILMP.

Belongs to the cytochrome b family. The cytochrome bc1 complex contains 11 subunits: 3 respiratory subunits (MT-CYB, CYC1 and UQCRFS1), 2 core proteins (UQCRC1 and UQCRC2) and 6 low-molecular weight proteins (UQCRH/QCR6, UQCRB/QCR7, UQCRQ/QCR8, UQCR10/QCR9, UQCR11/QCR10 and a cleavage product of UQCRFS1). This cytochrome bc1 complex then forms a dimer. The cofactor is heme b.

The protein resides in the mitochondrion inner membrane. Its function is as follows. Component of the ubiquinol-cytochrome c reductase complex (complex III or cytochrome b-c1 complex) that is part of the mitochondrial respiratory chain. The b-c1 complex mediates electron transfer from ubiquinol to cytochrome c. Contributes to the generation of a proton gradient across the mitochondrial membrane that is then used for ATP synthesis. This chain is Cytochrome b (MT-CYB), found in Akodon kofordi (Koford's grass mouse).